Reading from the N-terminus, the 159-residue chain is MQSKEDFIEMRVPASAEYVSLIRLTLSGVFSRAGATYDDIEDAKIAVSEAVTNAVKHAYKEKNNVGIINIYFEILEDKIKIVISDKGDSFDYETTKSKIGPYDKDENIDFLREGGLGLFLIESLMDEVTVYKESGVTISMTKYIKKEQVRNNGERVEIS.

This sequence belongs to the anti-sigma-factor family.

The catalysed reaction is L-seryl-[protein] + ATP = O-phospho-L-seryl-[protein] + ADP + H(+). The enzyme catalyses L-threonyl-[protein] + ATP = O-phospho-L-threonyl-[protein] + ADP + H(+). Functionally, negative regulator of sigma-B activity. Phosphorylates and inactivates its specific antagonist protein, RsbV. Upon phosphorylation of RsbV, RsbW is released and binds to sigma-B, thereby blocking its ability to form an RNA polymerase holoenzyme (E-sigma-B). The protein is Serine-protein kinase RsbW of Staphylococcus aureus (strain MRSA252).